We begin with the raw amino-acid sequence, 400 residues long: Mannitol-1-phosphate 5-dehydrogenase (400 aa).

NAD(+) is bound at residue 12–23; sequence AVHFGAGNIGRG. Lys221 is a catalytic residue.

It belongs to the mannitol dehydrogenase family. As to quaternary structure, monomer.

It catalyses the reaction D-mannitol 1-phosphate + NAD(+) = beta-D-fructose 6-phosphate + NADH + H(+). In terms of biological role, catalyzes the NAD(H)-dependent interconversion of D-fructose 6-phosphate and D-mannitol 1-phosphate in the mannitol metabolic pathway. The polypeptide is Mannitol-1-phosphate 5-dehydrogenase (Pyricularia oryzae (strain Y34) (Rice blast fungus)).